We begin with the raw amino-acid sequence, 163 residues long: Nodulin-13 (163 aa).

Positions 68 and 82 each coordinate kinetin. Positions 68 and 82 each coordinate N(6)-dimethylallyladenine. Q68, Y82, and Y133 together coordinate trans-zeatin.

The protein belongs to the BetVI family. In terms of assembly, homodimer. In terms of tissue distribution, expressed in nodules, but not in leaves, stems, flowers and roots. Specifically located in the nodule cortex.

Its function is as follows. May be involved in nodule organogenesis rather in the processes related to nitrogen fixation or interactions with the bacteria. May regulate nodulation by controlling the levels of freely available cytokinins. This chain is Nodulin-13 (N13), found in Medicago truncatula (Barrel medic).